The sequence spans 249 residues: Ribosomal RNA small subunit methyltransferase G (249 aa).

Residues G88, F93, 111–113 (DAT), 139–140 (AE), and R158 each bind S-adenosyl-L-methionine. The cysteines at positions 164 and 249 are disulfide-linked. The RNA binding stretch occupies residues 245 to 246 (RH).

Belongs to the methyltransferase superfamily. RNA methyltransferase RsmG family.

It localises to the cytoplasm. It catalyses the reaction guanosine(527) in 16S rRNA + S-adenosyl-L-methionine = N(7)-methylguanosine(527) in 16S rRNA + S-adenosyl-L-homocysteine. Its function is as follows. Specifically methylates the N7 position of guanine in position 527 of 16S rRNA. Shows a marked preference for deproteinized 16S rRNA as substrate and is completely inactive with native 30S subunits as substrate. This chain is Ribosomal RNA small subunit methyltransferase G, found in Thermus thermophilus (strain ATCC 27634 / DSM 579 / HB8).